Reading from the N-terminus, the 82-residue chain is Putative membrane protein insertion efficiency factor (82 aa).

Positions 61-82 are disordered; sequence HEGGYDPVPKRKNKNSEGKREE.

Belongs to the UPF0161 family.

It is found in the cell inner membrane. Functionally, could be involved in insertion of integral membrane proteins into the membrane. This chain is Putative membrane protein insertion efficiency factor, found in Fusobacterium nucleatum subsp. nucleatum (strain ATCC 25586 / DSM 15643 / BCRC 10681 / CIP 101130 / JCM 8532 / KCTC 2640 / LMG 13131 / VPI 4355).